The primary structure comprises 311 residues: MDTSTISRNFGYIKSKPDKRDVLITFDKKTIKTFKLTANIKPKIIDGIFDLRKIVTLPQALSEIDQGTLGSCTANAIAYAYAFAEIKQHNRNTFMPSRLFIYYNERMLENSIDEDSGAQIRTGIKTINKYGVCDEHHWVYDPLKFRVKPPIEAYEEAKVAKSVKYARIDFTKDTTIDDRIEHIKRALLSGFPIVFGFVVFESFMSQDVTKTGIVNMPKSYEQEIGGHAVCAVGFNENDKTFIVKNSWGSKWGLNGYFNMPYKYVADENLASDFWIIQEVTDPIINNFDPNDINPDAINLDVNINSGGVVHN.

The protein belongs to the peptidase C1 family.

This is an uncharacterized protein from Acanthamoeba polyphaga mimivirus (APMV).